We begin with the raw amino-acid sequence, 226 residues long: tRNA (guanine-N(1)-)-methyltransferase (226 aa).

Residues glycine 112 and isoleucine 132–leucine 137 contribute to the S-adenosyl-L-methionine site.

Belongs to the RNA methyltransferase TrmD family. As to quaternary structure, homodimer.

The protein resides in the cytoplasm. It catalyses the reaction guanosine(37) in tRNA + S-adenosyl-L-methionine = N(1)-methylguanosine(37) in tRNA + S-adenosyl-L-homocysteine + H(+). Specifically methylates guanosine-37 in various tRNAs. The protein is tRNA (guanine-N(1)-)-methyltransferase of Christiangramia forsetii (strain DSM 17595 / CGMCC 1.15422 / KT0803) (Gramella forsetii).